Here is a 176-residue protein sequence, read N- to C-terminus: Endoribonuclease YbeY (176 aa).

3 residues coordinate Zn(2+): His-139, His-143, and His-149.

Belongs to the endoribonuclease YbeY family. It depends on Zn(2+) as a cofactor.

It is found in the cytoplasm. Functionally, single strand-specific metallo-endoribonuclease involved in late-stage 70S ribosome quality control and in maturation of the 3' terminus of the 16S rRNA. In Acaryochloris marina (strain MBIC 11017), this protein is Endoribonuclease YbeY.